Reading from the N-terminus, the 128-residue chain is Large-conductance mechanosensitive channel (128 aa).

Helical transmembrane passes span 10 to 30 (FAMRGNVVDMAVGVIIGGAFG) and 76 to 96 (GMFIQNVFDFIIIAFAIFLMI).

It belongs to the MscL family. Homopentamer.

It localises to the cell inner membrane. In terms of biological role, channel that opens in response to stretch forces in the membrane lipid bilayer. May participate in the regulation of osmotic pressure changes within the cell. This is Large-conductance mechanosensitive channel from Actinobacillus succinogenes (strain ATCC 55618 / DSM 22257 / CCUG 43843 / 130Z).